A 400-amino-acid chain; its full sequence is Enoyl-[acyl-carrier-protein] reductase [NADH] (400 aa).

NAD(+)-binding positions include 48–53 (GSSSGY), 74–75 (FE), 111–112 (DA), and 139–140 (LA). Tyrosine 225 contacts substrate. Catalysis depends on tyrosine 235, which acts as the Proton donor. Residues lysine 244 and 273 to 275 (VVT) contribute to the NAD(+) site.

It belongs to the TER reductase family. As to quaternary structure, monomer.

It catalyses the reaction a 2,3-saturated acyl-[ACP] + NAD(+) = a (2E)-enoyl-[ACP] + NADH + H(+). It participates in lipid metabolism; fatty acid biosynthesis. Functionally, involved in the final reduction of the elongation cycle of fatty acid synthesis (FAS II). Catalyzes the reduction of a carbon-carbon double bond in an enoyl moiety that is covalently linked to an acyl carrier protein (ACP). The protein is Enoyl-[acyl-carrier-protein] reductase [NADH] of Shewanella baltica (strain OS185).